The primary structure comprises 317 residues: tRNA dimethylallyltransferase (317 aa).

13-20 (GPTASGKS) serves as a coordination point for ATP. 15–20 (TASGKS) is a binding site for substrate.

The protein belongs to the IPP transferase family. As to quaternary structure, monomer. Mg(2+) serves as cofactor.

It catalyses the reaction adenosine(37) in tRNA + dimethylallyl diphosphate = N(6)-dimethylallyladenosine(37) in tRNA + diphosphate. Functionally, catalyzes the transfer of a dimethylallyl group onto the adenine at position 37 in tRNAs that read codons beginning with uridine, leading to the formation of N6-(dimethylallyl)adenosine (i(6)A). The chain is tRNA dimethylallyltransferase from Kineococcus radiotolerans (strain ATCC BAA-149 / DSM 14245 / SRS30216).